The chain runs to 194 residues: Probable GTP-binding protein EngB (194 aa).

The region spanning 22–194 (DLPEYALAGR…AWQFIKEGME (173 aa)) is the EngB-type G domain. Residues 30 to 37 (GRSNVGKS), 57 to 61 (GKTQT), 75 to 78 (DVPG), 142 to 145 (TKAD), and 174 to 176 (FSS) each bind GTP. Positions 37 and 59 each coordinate Mg(2+).

It belongs to the TRAFAC class TrmE-Era-EngA-EngB-Septin-like GTPase superfamily. EngB GTPase family. The cofactor is Mg(2+).

Its function is as follows. Necessary for normal cell division and for the maintenance of normal septation. The polypeptide is Probable GTP-binding protein EngB (Listeria monocytogenes serovar 1/2a (strain ATCC BAA-679 / EGD-e)).